The primary structure comprises 528 residues: 2-isopropylmalate synthase (528 aa).

One can recognise a Pyruvate carboxyltransferase domain in the interval 12–279 (IRIFDTTLRD…DSSINTPRIV (268 aa)). The Mn(2+) site is built by Asp-21, His-214, His-216, and Asn-250. The interval 401–528 (RLASMTISDV…TTEAPAPATA (128 aa)) is regulatory domain.

This sequence belongs to the alpha-IPM synthase/homocitrate synthase family. LeuA type 1 subfamily. Homodimer. It depends on Mn(2+) as a cofactor.

The protein resides in the cytoplasm. It catalyses the reaction 3-methyl-2-oxobutanoate + acetyl-CoA + H2O = (2S)-2-isopropylmalate + CoA + H(+). The protein operates within amino-acid biosynthesis; L-leucine biosynthesis; L-leucine from 3-methyl-2-oxobutanoate: step 1/4. Functionally, catalyzes the condensation of the acetyl group of acetyl-CoA with 3-methyl-2-oxobutanoate (2-ketoisovalerate) to form 3-carboxy-3-hydroxy-4-methylpentanoate (2-isopropylmalate). This chain is 2-isopropylmalate synthase, found in Stenotrophomonas maltophilia (strain R551-3).